The chain runs to 433 residues: Glutamate-1-semialdehyde 2,1-aminomutase (433 aa).

Lys-271 carries the post-translational modification N6-(pyridoxal phosphate)lysine.

It belongs to the class-III pyridoxal-phosphate-dependent aminotransferase family. HemL subfamily. Homodimer. Requires pyridoxal 5'-phosphate as cofactor.

It localises to the cytoplasm. It catalyses the reaction (S)-4-amino-5-oxopentanoate = 5-aminolevulinate. The protein operates within porphyrin-containing compound metabolism; protoporphyrin-IX biosynthesis; 5-aminolevulinate from L-glutamyl-tRNA(Glu): step 2/2. It functions in the pathway porphyrin-containing compound metabolism; chlorophyll biosynthesis. The protein is Glutamate-1-semialdehyde 2,1-aminomutase of Prochlorococcus marinus subsp. pastoris (strain CCMP1986 / NIES-2087 / MED4).